The following is a 199-amino-acid chain: Adult-specific cuticular protein ACP-22 (199 aa).

Positions Met1 to Ser19 are cleaved as a signal peptide. Residues Gly63–Glu103 are disordered. Positions Gly82–Gly102 are enriched in gly residues. Positions His133–His199 constitute a Chitin-binding type R&amp;R domain.

As to expression, epidermal regions synthesizing hard cuticle.

Functionally, cuticular proteins play a significant role in determining the physical properties of cuticles. The sequence is that of Adult-specific cuticular protein ACP-22 (ACP22) from Tenebrio molitor (Yellow mealworm beetle).